Consider the following 244-residue polypeptide: 5-oxoprolinase subunit A (244 aa).

The protein belongs to the LamB/PxpA family. Forms a complex composed of PxpA, PxpB and PxpC.

It catalyses the reaction 5-oxo-L-proline + ATP + 2 H2O = L-glutamate + ADP + phosphate + H(+). Catalyzes the cleavage of 5-oxoproline to form L-glutamate coupled to the hydrolysis of ATP to ADP and inorganic phosphate. The sequence is that of 5-oxoprolinase subunit A from Escherichia coli O7:K1 (strain IAI39 / ExPEC).